We begin with the raw amino-acid sequence, 116 residues long: Protein Rev (116 aa).

2 positions are modified to phosphoserine; by host CK2: S5 and S8. Residues 18-26 (IIKILYQSN) are homomultimerization. The segment at 24–49 (QSNPHPSPEGTRQARRNRRRRWRERQ) is disordered. Residues 34-50 (TRQARRNRRRRWRERQR) carry the Nuclear localization signal and RNA-binding (RRE) motif. Positions 36 to 47 (QARRNRRRRWRE) are enriched in basic residues. The short motif at 73 to 84 (LQLPPLDRLTLD) is the Nuclear export signal and binding to XPO1 element. A phosphoserine; by host mark is found at S92 and S99.

It belongs to the HIV-1 REV protein family. In terms of assembly, homomultimer; when bound to the RRE. Multimeric assembly is essential for activity and may involve XPO1. Binds to human KPNB1, XPO1, TNPO1, RANBP5 and IPO7. Interacts with the viral Integrase. Interacts with human KHDRBS1. Interacts with human NAP1; this interaction decreases Rev multimerization and stimulates its activity. Interacts with human DEAD-box helicases DDX3 and DDX24; these interactions may serve for viral RNA export to the cytoplasm and packaging, respectively. Interacts with human PSIP1; this interaction may inhibit HIV-1 DNA integration by promoting dissociation of the Integrase-LEDGF/p75 complex. In terms of processing, asymmetrically arginine dimethylated at one site by host PRMT6. Methylation impairs the RNA-binding activity and export of viral RNA from the nucleus to the cytoplasm. Phosphorylated by protein kinase CK2. Presence of, and maybe binding to the N-terminus of the regulatory beta subunit of CK2 is necessary for CK2-mediated Rev's phosphorylation.

It localises to the host nucleus. It is found in the host nucleolus. Its subcellular location is the host cytoplasm. Escorts unspliced or incompletely spliced viral pre-mRNAs (late transcripts) out of the nucleus of infected cells. These pre-mRNAs carry a recognition sequence called Rev responsive element (RRE) located in the env gene, that is not present in fully spliced viral mRNAs (early transcripts). This function is essential since most viral proteins are translated from unspliced or partially spliced pre-mRNAs which cannot exit the nucleus by the pathway used by fully processed cellular mRNAs. Rev itself is translated from a fully spliced mRNA that readily exits the nucleus. Rev's nuclear localization signal (NLS) binds directly to KPNB1/Importin beta-1 without previous binding to KPNA1/Importin alpha-1. KPNB1 binds to the GDP bound form of RAN (Ran-GDP) and targets Rev to the nucleus. In the nucleus, the conversion from Ran-GDP to Ran-GTP dissociates Rev from KPNB1 and allows Rev's binding to the RRE in viral pre-mRNAs. Rev multimerization on the RRE via cooperative assembly exposes its nuclear export signal (NES) to the surface. Rev can then form a complex with XPO1/CRM1 and Ran-GTP, leading to nuclear export of the complex. Conversion from Ran-GTP to Ran-GDP mediates dissociation of the Rev/RRE/XPO1/RAN complex, so that Rev can return to the nucleus for a subsequent round of export. Beside KPNB1, also seems to interact with TNPO1/Transportin-1, RANBP5/IPO5 and IPO7/RANBP7 for nuclear import. The nucleoporin-like HRB/RIP is an essential cofactor that probably indirectly interacts with Rev to release HIV RNAs from the perinuclear region to the cytoplasm. The sequence is that of Protein Rev from Human immunodeficiency virus type 1 group M subtype B (isolate SF33) (HIV-1).